The primary structure comprises 688 residues: MIOREX complex component 1 (688 aa).

The interval 1-24 is disordered; sequence MGLKITKGQLRTKDLNQSSSKSSQ. Residues 1-46 constitute a mitochondrion transit peptide; it reads MGLKITKGQLRTKDLNQSSSKSSQSSRIGVDTCIFTRMLPRINTAI.

As to quaternary structure, associates with the mitochondrial ribosome.

The protein localises to the mitochondrion. Functionally, component of MIOREX complexes, large expressome-like assemblies of ribosomes with factors involved in all the steps of post-transcriptional gene expression. This is MIOREX complex component 1 from Saccharomyces cerevisiae (strain ATCC 204508 / S288c) (Baker's yeast).